The chain runs to 360 residues: Protein OSB4, chloroplastic (360 aa).

Residues 1-61 (MQFLGRSISK…AEKSSEEWPR (61 aa)) constitute a chloroplast transit peptide. Positions 28-64 (SQQFLSTSSTESSSRTRGGGGGNRAEKSSEEWPRPME) are disordered. Positions 33-43 (STSSTESSSRT) are enriched in low complexity. Positions 51–61 (RAEKSSEEWPR) are enriched in basic and acidic residues. An SSB domain is found at 71 to 188 (IANSIDLIGY…VMVRDLHYIE (118 aa)). PDF region regions lie at residues 224–276 (WFDL…SELK) and 296–344 (WKDL…EKLP).

Its subcellular location is the plastid. The protein localises to the chloroplast. In terms of biological role, binds single-stranded DNA. In Arabidopsis thaliana (Mouse-ear cress), this protein is Protein OSB4, chloroplastic (OSB4).